Consider the following 632-residue polypeptide: MVQASSHAEGGQGATRSLSLLVAAVGVVYGDIGTSPLYTLKEVFTGGYGVPVNHDGVLGILSLILWSLLWVVSFKYVMFILRADNQGEGGTMALTALARRATAAYPRLRTLMVICGLIGASLFYGDSMITPAVSVLSAVEGMGLAFDGIDHWVVPISLVVLVALFLVQKHGTEKIGKLFGPIMVTWFVVLAALGVHGISQSPEVLKAFNPGWAVNFFIVHPGMGVAILGAVVLALTGAEALYADMGHFGRKPIARAWFALVLPALVLNYFGQGAILLQNPDAARNPFYLLAPGWALLPLVGLATMATVIASQAVISGAFSLTRQAIQLGYIPRMHIQHTSSDEQGQIYIAAVNWTLMVGVVLLVIGFESSGALAAAYGVAVTGTMLMTTILVSAVMLLLWKWPPVLAVPILIGFLLVDGLFFAANVPKIVQGGAFPVLAGGVLFLLMSTWKRGKQILVERIDEGGLPLPVFISSIRIQPPHRVEGTAVFLTARPDAVPHALLHNMLHNQVLHSQVVLLTVVSEDRPRVPEQERFEVEAYGDGFFRVLLHFGFMDEPDVPAALKLCHLDGLDFTPMRTTYFLSRETVIASRLEGMSRWRGNLFAFLLKNANGNLRFFNLPLNRVIELGTQVEI.

12 helical membrane passes run 20–40, 60–80, 111–131, 146–166, 178–198, 216–236, 257–277, 289–309, 347–367, 379–399, 404–424, and 429–449; these read LLVA…LYTL, ILSL…VMFI, LMVI…MITP, FDGI…ALFL, LFGP…VHGI, FFIV…LALT, WFAL…AILL, LLAP…ATVI, IYIA…VIGF, VAVT…MLLL, PVLA…FFAA, and IVQG…LMST.

It belongs to the HAK/KUP transporter (TC 2.A.72) family.

It localises to the cell inner membrane. It catalyses the reaction K(+)(in) + H(+)(in) = K(+)(out) + H(+)(out). Its function is as follows. Transport of potassium into the cell. Likely operates as a K(+):H(+) symporter. This is Probable potassium transport system protein Kup from Pseudomonas putida (strain W619).